The chain runs to 61 residues: Photosystem II reaction center protein K (61 aa).

Residues 1–24 (MPNILSLTCICFNSVIYPTSFFFA) constitute a propeptide that is removed on maturation. Residues 32–52 (IFNPIVDFMPVIPLFFFLLAF) form a helical membrane-spanning segment.

It belongs to the PsbK family. In terms of assembly, PSII is composed of 1 copy each of membrane proteins PsbA, PsbB, PsbC, PsbD, PsbE, PsbF, PsbH, PsbI, PsbJ, PsbK, PsbL, PsbM, PsbT, PsbX, PsbY, PsbZ, Psb30/Ycf12, at least 3 peripheral proteins of the oxygen-evolving complex and a large number of cofactors. It forms dimeric complexes.

Its subcellular location is the plastid. It localises to the chloroplast thylakoid membrane. One of the components of the core complex of photosystem II (PSII). PSII is a light-driven water:plastoquinone oxidoreductase that uses light energy to abstract electrons from H(2)O, generating O(2) and a proton gradient subsequently used for ATP formation. It consists of a core antenna complex that captures photons, and an electron transfer chain that converts photonic excitation into a charge separation. This chain is Photosystem II reaction center protein K, found in Triticum aestivum (Wheat).